The chain runs to 350 residues: Ion-translocating oxidoreductase complex subunit D (350 aa).

Transmembrane regions (helical) follow at residues 20 to 40 (VMVLVILCLIPGVFLQSYFFG), 44 to 64 (LIQISLACLAALASEAFILKI), 68 to 88 (PVLNTLKDASALLTAILLAIS), 89 to 109 (IPPLAPWWIVVIGTIFAIIFV), and 125 to 145 (MAGYVLLLISFPVQMTSWLPV). Position 187 is an FMN phosphoryl threonine (threonine 187). Transmembrane regions (helical) follow at residues 215–235 (SWQQIYWINGAFLAGGLILLF), 241–261 (WHIPMSFLLGIGIFSFIAFAY), 267–287 (APPLFHLFSGATMLGAFFILS), 300–320 (ILYALLIAFIVVIIRNVGGYP), and 322–342 (AVAFAVLLGNMCVPLIDYYTQ).

It belongs to the NqrB/RnfD family. The complex is composed of six subunits: RnfA, RnfB, RnfC, RnfD, RnfE and RnfG. Requires FMN as cofactor.

The protein resides in the cell inner membrane. Its function is as follows. Part of a membrane-bound complex that couples electron transfer with translocation of ions across the membrane. This Psychromonas ingrahamii (strain DSM 17664 / CCUG 51855 / 37) protein is Ion-translocating oxidoreductase complex subunit D.